We begin with the raw amino-acid sequence, 345 residues long: Diacylglycerol O-acyltransferase 1 (345 aa).

Residues 1–49 are Cytoplasmic-facing; the sequence is MSEETSIPGIIASTPPISKDSRRNVSHWLQALAVFLHSVSLTLTASWYT. Residues 50–70 form a helical membrane-spanning segment; that stretch reads VLWAFLPFWPFLIVYLIWLIY. Residues 71–113 are Lumenal-facing; it reads DDGFVTGKDRQKRWLRNAPPYRWFCHYFPIRLHKTTELDSEKN. Residues 114-134 traverse the membrane as a helical segment; the sequence is YIFGYHPHGIISLGAFGGFAS. The Cytoplasmic portion of the chain corresponds to 135 to 141; it reads EGADFSK. The chain crosses the membrane as a helical span at residues 142 to 162; it reads LFPGINVSVLTLNSNFYVPVY. Residues 163 to 216 lie on the Lumenal side of the membrane; sequence RDYLMALNINSVSKKSCVSILSRKPGDSVLIVIGGAQESLLSRPGQNNLVLKKR. A helical transmembrane segment spans residues 217 to 237; that stretch reads FGFVKLAFLTGSSLVPCFAFG. At 238-345 the chain is on the cytoplasmic side; it reads ESDIFEQVDN…NRISELKLSA (108 aa).

It belongs to the diacylglycerol acyltransferase family.

The protein resides in the lipid droplet. It localises to the endoplasmic reticulum membrane. The enzyme catalyses an acyl-CoA + a 1,2-diacyl-sn-glycerol = a triacyl-sn-glycerol + CoA. The catalysed reaction is a 2-acylglycerol + an acyl-CoA = a 1,2-diacyl-sn-glycerol + CoA. It functions in the pathway glycerolipid metabolism; triacylglycerol biosynthesis. Catalyzes the terminal and only committed step in triacylglycerol (TAG) synthesis by using diacylglycerol (DAG) and fatty acyl-CoA as substrates. Required for storage lipid synthesis. Major DAG esterifying enzyme in stationary phase when TAG production is particularly active. Involved in lipid particle synthesis from the endoplasmic reticulum, promoting localized TAG production at discrete ER subdomains. This Schizosaccharomyces pombe (strain 972 / ATCC 24843) (Fission yeast) protein is Diacylglycerol O-acyltransferase 1 (dga1).